The primary structure comprises 85 residues: MAHKKAGGSSRNGRDSESKRLGVKRFGDQQVLAGNILVRQRGTPFLAGINVGTGRDHTLYAKAAGKVQFVRRGPKSRTYVDVVTN.

The segment at 1-23 (MAHKKAGGSSRNGRDSESKRLGV) is disordered.

It belongs to the bacterial ribosomal protein bL27 family.

In Nitrosococcus oceani (strain ATCC 19707 / BCRC 17464 / JCM 30415 / NCIMB 11848 / C-107), this protein is Large ribosomal subunit protein bL27.